Here is a 23-residue protein sequence, read N- to C-terminus: Coenzyme PQQ synthesis protein A (23 aa).

Positions 15-19 (EVTLY) form a cross-link, pyrroloquinoline quinone (Glu-Tyr).

It belongs to the PqqA family.

It functions in the pathway cofactor biosynthesis; pyrroloquinoline quinone biosynthesis. Its function is as follows. Required for coenzyme pyrroloquinoline quinone (PQQ) biosynthesis. PQQ is probably formed by cross-linking a specific glutamate to a specific tyrosine residue and excising these residues from the peptide. This is Coenzyme PQQ synthesis protein A from Colwellia psychrerythraea (strain 34H / ATCC BAA-681) (Vibrio psychroerythus).